Here is a 227-residue protein sequence, read N- to C-terminus: Cytochrome c oxidase subunit 2 (227 aa).

The Mitochondrial intermembrane portion of the chain corresponds to 1–14 (MAYPMQLGLQDATS). Residues 15–45 (PIMEELTDFHDHTLMIVFLISTLVLYIISLM) form a helical membrane-spanning segment. Residues 46-59 (LTTKLTHTNTMDAQ) are Mitochondrial matrix-facing. A helical transmembrane segment spans residues 60–87 (EVETVWTILPAIILIMIALPSLRILYMM). Topologically, residues 88 to 227 (DEINDPYLTV…QFESWTSSMT (140 aa)) are mitochondrial intermembrane. Residues histidine 161, cysteine 196, glutamate 198, cysteine 200, histidine 204, and methionine 207 each contribute to the Cu cation site. Position 198 (glutamate 198) interacts with Mg(2+).

The protein belongs to the cytochrome c oxidase subunit 2 family. In terms of assembly, component of the cytochrome c oxidase (complex IV, CIV), a multisubunit enzyme composed of 14 subunits. The complex is composed of a catalytic core of 3 subunits MT-CO1, MT-CO2 and MT-CO3, encoded in the mitochondrial DNA, and 11 supernumerary subunits COX4I, COX5A, COX5B, COX6A, COX6B, COX6C, COX7A, COX7B, COX7C, COX8 and NDUFA4, which are encoded in the nuclear genome. The complex exists as a monomer or a dimer and forms supercomplexes (SCs) in the inner mitochondrial membrane with NADH-ubiquinone oxidoreductase (complex I, CI) and ubiquinol-cytochrome c oxidoreductase (cytochrome b-c1 complex, complex III, CIII), resulting in different assemblies (supercomplex SCI(1)III(2)IV(1) and megacomplex MCI(2)III(2)IV(2)). Found in a complex with TMEM177, COA6, COX18, COX20, SCO1 and SCO2. Interacts with TMEM177 in a COX20-dependent manner. Interacts with COX20. Interacts with COX16. Cu cation is required as a cofactor.

It is found in the mitochondrion inner membrane. It catalyses the reaction 4 Fe(II)-[cytochrome c] + O2 + 8 H(+)(in) = 4 Fe(III)-[cytochrome c] + 2 H2O + 4 H(+)(out). Component of the cytochrome c oxidase, the last enzyme in the mitochondrial electron transport chain which drives oxidative phosphorylation. The respiratory chain contains 3 multisubunit complexes succinate dehydrogenase (complex II, CII), ubiquinol-cytochrome c oxidoreductase (cytochrome b-c1 complex, complex III, CIII) and cytochrome c oxidase (complex IV, CIV), that cooperate to transfer electrons derived from NADH and succinate to molecular oxygen, creating an electrochemical gradient over the inner membrane that drives transmembrane transport and the ATP synthase. Cytochrome c oxidase is the component of the respiratory chain that catalyzes the reduction of oxygen to water. Electrons originating from reduced cytochrome c in the intermembrane space (IMS) are transferred via the dinuclear copper A center (CU(A)) of subunit 2 and heme A of subunit 1 to the active site in subunit 1, a binuclear center (BNC) formed by heme A3 and copper B (CU(B)). The BNC reduces molecular oxygen to 2 water molecules using 4 electrons from cytochrome c in the IMS and 4 protons from the mitochondrial matrix. In Cratogeomys castanops (Yellow-faced pocket gopher), this protein is Cytochrome c oxidase subunit 2 (MT-CO2).